The following is a 190-amino-acid chain: High affinity copper uptake protein 1 (190 aa).

Residues 1–35 (MDHSHHMGMSYMDSNSTMQPSHHHPTTSASHSHGG) form a disordered region. The Extracellular segment spans residues 1 to 61 (MDHSHHMGMS…KNVELLFSGL (61 aa)). The Bis-His motif signature appears at 5–6 (HH). A Methionine segments (Mets) motif motif is present at residues 7–12 (MGMSYM). Residue Asn-15 is glycosylated (N-linked (GlcNAc...) asparagine). The segment covering 26-35 (TTSASHSHGG) has biased composition (low complexity). O-linked (GalNAc...) threonine glycosylation is present at Thr-27. A helical transmembrane segment spans residues 62-82 (VINTAGEMAGAFVAVFLLAMF). Residues 83-132 (YEGLKIARESLLRKSQVSIRYNSMPVPGPNGTILMETHKTVGQQMLSFPH) lie on the Cytoplasmic side of the membrane. Thr-114 is subject to Phosphothreonine. The chain crosses the membrane as a helical span at residues 133–153 (LLQTVLHIIQVVISYFLMLIF). At 154–156 (MTY) the chain is on the extracellular side. Residues 157–177 (NGYLCIAVAAGAGTGYFLFSW) traverse the membrane as a helical segment. Residues 178–190 (KKAVVVDITEHCH) lie on the Cytoplasmic side of the membrane. Cys-189 is modified (cysteine sulfenic acid (-SOH)).

The protein belongs to the copper transporter (Ctr) (TC 1.A.56) family. SLC31A subfamily. As to quaternary structure, homotrimer; is stabilized by cisplatin via interactions between cisplatin and the methionine-rich clusters, and could be crucial for the copper(2+) reduction process and copper(1+) stabilization. Heterotrimer between SLC31A1, CCS and SOD1; this heterotrimer is copper(1+)-mediated and its maintenance is regulated through SOD1 activation. Interacts with KDR; this interaction is induced upon VEGFA stimulation leading to SLC31A1 and KDR subsequent co-internalization to early endosomes, thereby activating KDR downstream signaling in endothelial cells. Interacts (via C-terminal domain) with ATOX1 (via dimer form); this interaction improves ATOX1 stability and controls intracellular copper(1+) levels. Interacts with SLC31A2; this interaction stabilizes SLC31A2 and protects its from ubiquitination and degradation. Interacts (via C-terminal domain) with CCS; this interaction is copper(1+)-mediated. Post-translationally, O-Glycosylation at Thr-27 protects from proteolytic cleavage in the N-terminal extracellular domain. In terms of processing, proteolytic cleavage, leading to a truncated form, is facilitated by SLC31A2 and initiated preferentially by CTSL and to a minor extend by CTSB in endolysosomal compartments. In vitro, is cleaved by CTSL/cathepsin L between residues 8 and 9 from the amino terminus. A post-CTSL/cathepsin L processing occurs to yield to the fully truncated form. Sulfenylated at Cys-189 after stimulation with VEGFA, which induces SLC31A1-KDR disulfide bond formation and their co-internalization to early endosomes, driving to a sustained VEGFR2 signaling.

The protein resides in the cell membrane. Its subcellular location is the early endosome membrane. It localises to the recycling endosome membrane. It is found in the apical cell membrane. The protein localises to the late endosome membrane. The protein resides in the basolateral cell membrane. It catalyses the reaction Ag(+)(out) = Ag(+)(in). The enzyme catalyses Cu(+)(out) = Cu(+)(in). Copper(1+) transport is stimulated by extracellular acidic pH and high potassium ions concentrations. Copper(1+) import is regulated by a copper(1+)-dependent recycling of SLC31A1. Uniporter that mediates the transport of copper(1+) from the extracellular space to the cytoplasm, across the plasma membrane and delivers directly copper(1+) to specific chaperone such as ATOX1, via a copper(1+)- mediated transient interaction between the C-terminal domain and a copper(1+) chaperone, thus controlling intracellular copper(1+) levels. May function in copper(1+) import from the apical membrane thus may drive intestinal copper absorption. The copper(1+) transport mechanism is sodium-independent, saturable and of high-affinity. Also mediates the uptake of silver(1+). May function in the influx of the platinum-containing chemotherapeutic agents. The platinum-containing chemotherapeutic agents uptake is saturable. In vitro, mediates the transport of cadmium(2+) into cells. Also participates in the first step of copper(2+) acquisition by cells through a direct transfer of copper(2+) from copper(2+) carriers in blood, such as ALB to the N-terminal domain of SLC31A1, leading to copper(2+) reduction and probably followed by copper(1+) stabilization. In addition, functions as a redox sensor to promote angiogenesis in endothelial cells, in a copper(1+) transport independent manner, by transmitting the VEGF-induced ROS signal through a sulfenylation at Cys-189 leadin g to a subsequent disulfide bond formation between SLC31A1 and KDR. The SLC31A1-KDR complex is then co-internalized to early endosomes, driving a sustained VEGFR2 signaling. Functionally, mobilizes copper(1+) out of the endosomal compartment, making copper(1+) available for export out of the cells. In Homo sapiens (Human), this protein is High affinity copper uptake protein 1.